We begin with the raw amino-acid sequence, 248 residues long: Probable transcriptional regulatory protein BBta_6910 (248 aa).

Belongs to the TACO1 family.

Its subcellular location is the cytoplasm. The sequence is that of Probable transcriptional regulatory protein BBta_6910 from Bradyrhizobium sp. (strain BTAi1 / ATCC BAA-1182).